Consider the following 73-residue polypeptide: Conotoxin Vc6.17 (73 aa).

The N-terminal stretch at 1-19 is a signal peptide; sequence MQKLIILLLVAAVLMSTQA. The propeptide occupies 20 to 44; the sequence is LFQEKRRKEKIDLLSKRKTDAEKQH. Disulfide bonds link C48–C62, C55–C66, and C61–C71.

Belongs to the conotoxin O2 superfamily. In terms of tissue distribution, expressed by the venom duct.

It is found in the secreted. In terms of biological role, inhibits voltage-gated ion channels. The sequence is that of Conotoxin Vc6.17 from Conus victoriae (Queen Victoria cone).